A 511-amino-acid chain; its full sequence is Bifunctional purine biosynthesis protein PurH (511 aa).

The MGS-like domain occupies 1–145; it reads MKKRALVSVS…KNHKFVSVIV (145 aa).

The protein belongs to the PurH family.

It catalyses the reaction (6R)-10-formyltetrahydrofolate + 5-amino-1-(5-phospho-beta-D-ribosyl)imidazole-4-carboxamide = 5-formamido-1-(5-phospho-D-ribosyl)imidazole-4-carboxamide + (6S)-5,6,7,8-tetrahydrofolate. The catalysed reaction is IMP + H2O = 5-formamido-1-(5-phospho-D-ribosyl)imidazole-4-carboxamide. It functions in the pathway purine metabolism; IMP biosynthesis via de novo pathway; 5-formamido-1-(5-phospho-D-ribosyl)imidazole-4-carboxamide from 5-amino-1-(5-phospho-D-ribosyl)imidazole-4-carboxamide (10-formyl THF route): step 1/1. The protein operates within purine metabolism; IMP biosynthesis via de novo pathway; IMP from 5-formamido-1-(5-phospho-D-ribosyl)imidazole-4-carboxamide: step 1/1. This chain is Bifunctional purine biosynthesis protein PurH, found in Bacillus mycoides (strain KBAB4) (Bacillus weihenstephanensis).